We begin with the raw amino-acid sequence, 355 residues long: WAT1-related protein At3g28130 (355 aa).

The next 10 membrane-spanning stretches (helical) occupy residues 11 to 31 (AVLL…NTLF), 42 to 62 (YTFL…SHIF), 80 to 100 (IGVL…GIEY), 104 to 124 (TLAS…AIIF), 136 to 156 (SVAK…VVLY), 186 to 206 (WIIG…AFIL), 218 to 238 (FTVS…IGIV), 244 to 264 (PSIW…GGIF), 290 to 310 (LSIL…FYLG), and 311 to 331 (SLVG…GKAK). In terms of domain architecture, EamA spans 29–154 (TLFKAATSKG…VSLVGALVVV (126 aa)).

Belongs to the drug/metabolite transporter (DMT) superfamily. Plant drug/metabolite exporter (P-DME) (TC 2.A.7.4) family.

The protein localises to the membrane. The protein is WAT1-related protein At3g28130 of Arabidopsis thaliana (Mouse-ear cress).